The following is a 144-amino-acid chain: D-aminoacyl-tRNA deacylase (144 aa).

The short motif at 136 to 137 is the Gly-cisPro motif, important for rejection of L-amino acids element; sequence GP.

This sequence belongs to the DTD family. In terms of assembly, homodimer.

The protein resides in the cytoplasm. It carries out the reaction glycyl-tRNA(Ala) + H2O = tRNA(Ala) + glycine + H(+). The catalysed reaction is a D-aminoacyl-tRNA + H2O = a tRNA + a D-alpha-amino acid + H(+). An aminoacyl-tRNA editing enzyme that deacylates mischarged D-aminoacyl-tRNAs. Also deacylates mischarged glycyl-tRNA(Ala), protecting cells against glycine mischarging by AlaRS. Acts via tRNA-based rather than protein-based catalysis; rejects L-amino acids rather than detecting D-amino acids in the active site. By recycling D-aminoacyl-tRNA to D-amino acids and free tRNA molecules, this enzyme counteracts the toxicity associated with the formation of D-aminoacyl-tRNA entities in vivo and helps enforce protein L-homochirality. In Haemophilus influenzae (strain PittEE), this protein is D-aminoacyl-tRNA deacylase.